The chain runs to 497 residues: MRPLYSCNLATKDDIEMAGGVAPAHLEVNVGGYNTEQTIPIVKHQLVKVGRNDKECQLVLTNPSISSVHCVFWCVFFDEDSIPMFYVKDCSLNGTYLNGLLLKRDKTYLLKHCDVIELSQGSEENDIKKTRLVFMINDDLQSSLDPKLLDQMGFLREVDQWEITNRIVGNGTFGHVLITHNSKERDEDVCYHPENYAVKIIKLKPNKFDKEARILLRLDHPNIIKVYHTFCDRNNHLYIFQDLIPGGDLFSYLAKGDCLTSMSETESLLIVFQILQALNYLHDQDIVHRDLKLDNILLCTPEPCTRIVLADFGIAKDLNSNKERMHTVVGTPEYCAPEVGFRANRKAYQSFSRAATLEQRGYDSKCDLWSLGVITHIMLTGISPFYGDGSERSIIQNAKIGKLNFKLKQWDIVSDNAKSFVKDLLQTDVVKRLNSKQGLKHIWIAKHLSQLERLYYKKILCNNEGPKLESINSDWKRKLPKSVIISQAIPKKKKVLE.

The region spanning 47–102 (VKVGRNDKECQLVLTNPSISSVHCVFWCVFFDEDSIPMFYVKDCSLNGTYLNGLLL) is the FHA domain. The region spanning 162 to 444 (EITNRIVGNG…SKQGLKHIWI (283 aa)) is the Protein kinase domain. ATP is bound by residues 168–176 (VGNGTFGHV) and lysine 199. Aspartate 290 acts as the Proton acceptor in catalysis.

It belongs to the protein kinase superfamily. CAMK Ser/Thr protein kinase family. CHEK2 subfamily.

It carries out the reaction L-seryl-[protein] + ATP = O-phospho-L-seryl-[protein] + ADP + H(+). The catalysed reaction is L-threonyl-[protein] + ATP = O-phospho-L-threonyl-[protein] + ADP + H(+). Its function is as follows. Probable protein kinase required for meiotic recombination. The polypeptide is Meiosis-specific serine/threonine-protein kinase MEK1 (MEK1) (Saccharomyces cerevisiae (strain ATCC 204508 / S288c) (Baker's yeast)).